The following is an 802-amino-acid chain: Sucrose synthase 1 (802 aa).

The segment at 272–749 is GT-B glycosyltransferase; it reads MMFNVVILSP…GLQRIYEKYT (478 aa).

It belongs to the glycosyltransferase 1 family. Plant sucrose synthase subfamily.

The enzyme catalyses an NDP-alpha-D-glucose + D-fructose = a ribonucleoside 5'-diphosphate + sucrose + H(+). Its function is as follows. Sucrose-cleaving enzyme that provides UDP-glucose and fructose for various metabolic pathways. Most active in the sink tissues where it is responsible for the breakdown of the arriving sucrose. This Zea mays (Maize) protein is Sucrose synthase 1 (SH-1).